The following is a 443-amino-acid chain: DILAAFRVSPQPGVPPEEAGAAVAAESSTGTWTTVWTDGLTSLDRYKGRCYQIEPVPGEPDQYICYVAYPLDLFEEGSVTNMFTSIVGNVFGFKALRALRLEDLRIPVAYVKTFQGPPHGIQVERDKLNKYGRPLLGCTIKPKLGLSAKNYGRACYECLRGGLDFTKDDENVNSQPFMRWRDRFLFCAEAIYKSQAETGEIKGHYLNATAGTCEEMMKRAIFARELGVPIIMHDYLTGGFTANTSLAHYCRDNGLLLHIHRAMHAVIDRQKNHGIHFRVLAKALRMSGGDHIHSGTVVGKLEGERDITLGFVDLLRDDYIEKDRSRGIYFTQDWVSLPGVIPVASGGIHVWHMPALTEIFGDDSVLQFGGGTLGHPWGNAPGAVANRVALEACVQARNEGRDLAVEGNTIIREACKWSPELAAACEVWKEIKFEFAAMDTLDK.

Residues asparagine 89 and threonine 139 each contribute to the substrate site. Catalysis depends on lysine 141, which acts as the Proton acceptor. A substrate-binding site is contributed by lysine 143. Mg(2+) contacts are provided by lysine 167, aspartate 169, and glutamate 170. An N6-carboxylysine modification is found at lysine 167. Histidine 260 acts as the Proton acceptor in catalysis. Positions 261, 293, and 345 each coordinate substrate.

This sequence belongs to the RuBisCO large chain family. Type I subfamily. As to quaternary structure, heterohexadecamer of 8 large chains and 8 small chains; disulfide-linked. The disulfide link is formed within the large subunit homodimers. It depends on Mg(2+) as a cofactor. Post-translationally, the disulfide bond which can form in the large chain dimeric partners within the hexadecamer appears to be associated with oxidative stress and protein turnover.

The protein localises to the plastid. Its subcellular location is the chloroplast. The enzyme catalyses 2 (2R)-3-phosphoglycerate + 2 H(+) = D-ribulose 1,5-bisphosphate + CO2 + H2O. The catalysed reaction is D-ribulose 1,5-bisphosphate + O2 = 2-phosphoglycolate + (2R)-3-phosphoglycerate + 2 H(+). In terms of biological role, ruBisCO catalyzes two reactions: the carboxylation of D-ribulose 1,5-bisphosphate, the primary event in carbon dioxide fixation, as well as the oxidative fragmentation of the pentose substrate in the photorespiration process. Both reactions occur simultaneously and in competition at the same active site. This is Ribulose bisphosphate carboxylase large chain from Callitriche heterophylla (Large water-starwort).